The primary structure comprises 26 residues: Turripeptide OL49 (26 aa).

Contains 3 disulfide bonds. As to expression, expressed by the venom duct.

Its subcellular location is the secreted. Functionally, acts as a neurotoxin by inhibiting an ion channel. In Iotyrris olangoensis (Sea snail), this protein is Turripeptide OL49.